The chain runs to 90 residues: Succinate dehydrogenase subunit 7, mitochondrial (90 aa).

A mitochondrion-targeting transit peptide spans methionine 1–arginine 41.

In terms of assembly, component of complex II composed of eight subunits in plants: four classical SDH subunits SDH1, SDH2, SDH3 and SDH4 (a flavoprotein (FP), an iron-sulfur protein (IP), and a cytochrome b composed of a large and a small subunit.), as well as four subunits unknown in mitochondria from bacteria and heterotrophic eukaryotes.

It is found in the mitochondrion inner membrane. The protein operates within carbohydrate metabolism; tricarboxylic acid cycle. This is Succinate dehydrogenase subunit 7, mitochondrial from Oryza sativa subsp. japonica (Rice).